Reading from the N-terminus, the 339-residue chain is MSNEGSREESREPEAREGKSDEIFEVEKILAHKVTDNLLVLQVRWLGYGADEDTWEPEEDLQECASEVVAEYYKKLKVTDKTELIELLQKQIKKNKSQKSKKRSKTVSDHESNHDSDGSYGTPKTSKKSKKSAKNETPVSSKVPKVPTKAALKSYEATVSGPVAPNNAKKAAMEVRDTRRNWLDEESSDDEAETTAPLSDVEKIASKVKVVKAVEEKAEEPVKRPSTPPKPREVVIKKDPSESPVASASSVIPTSKRKSINAETSNGRQRTLAPPVIVKDETTWTVDGIARHTDVDNTKTKLILMTNSATGERKVVEGREAFELDGWALAKYLLDRCEF.

The disordered stretch occupies residues 1 to 21 (MSNEGSREESREPEAREGKSD). Residues 24-84 (FEVEKILAHK…KLKVTDKTEL (61 aa)) enclose the Chromo domain. Over residues 91-105 (QIKKNKSQKSKKRSK) the composition is skewed to basic residues. Disordered stretches follow at residues 91–199 (QIKK…APLS) and 215–272 (EEKA…QRTL). Basic and acidic residues-rich tracts occupy residues 106–117 (TVSDHESNHDSD) and 171–183 (AAME…RNWL). The segment covering 184-193 (DEESSDDEAE) has biased composition (acidic residues). A compositionally biased stretch (basic and acidic residues) spans 230–241 (KPREVVIKKDPS). The segment covering 242–251 (ESPVASASSV) has biased composition (low complexity).

Expressed in every cell of the embryo (at protein level). In adults, expressed predominantly in the head region and the germline.

It is found in the chromosome. The protein localises to the nucleus. Its function is as follows. Specifically recognizes and binds methylated 'Lys-9' of histone H3 (H3K9me), with highest preference for trimethylated 'Lys-9' (H3K9me3) followed by dimethylated 'Lys-9' (H3K9me2) followed by monomethylated 'Lys-9' (H3K9me1). Plays a role in maintaining correct unc-4 expression in the VC motor neurons where unc-4 is expressed in the vulval but not in the non-vulval VC neurons. In Caenorhabditis elegans, this protein is Chromo domain-containing protein cec-3 (cec-3).